A 93-amino-acid chain; its full sequence is Large ribosomal subunit protein bL27 (93 aa).

A propeptide spanning residues 1–9 is cleaved from the precursor; it reads MIKINLQLF.

Belongs to the bacterial ribosomal protein bL27 family. In terms of processing, the N-terminus is cleaved by ribosomal processing cysteine protease Prp.

The chain is Large ribosomal subunit protein bL27 from Ruminiclostridium cellulolyticum (strain ATCC 35319 / DSM 5812 / JCM 6584 / H10) (Clostridium cellulolyticum).